The primary structure comprises 43 residues: Cytochrome b559 subunit beta (43 aa).

The chain crosses the membrane as a helical span at residues 18-34 (WLAVHTLAVPSVFFLGA). A heme-binding site is contributed by histidine 22.

Belongs to the PsbE/PsbF family. Heterodimer of an alpha subunit and a beta subunit. PSII is composed of 1 copy each of membrane proteins PsbA, PsbB, PsbC, PsbD, PsbE, PsbF, PsbH, PsbI, PsbJ, PsbK, PsbL, PsbM, PsbT, PsbX, PsbY, PsbZ, Psb30/Ycf12, peripheral proteins PsbO, CyanoQ (PsbQ), PsbU, PsbV and a large number of cofactors. It forms dimeric complexes. Requires heme b as cofactor.

The protein localises to the cellular thylakoid membrane. This b-type cytochrome is tightly associated with the reaction center of photosystem II (PSII). PSII is a light-driven water:plastoquinone oxidoreductase that uses light energy to abstract electrons from H(2)O, generating O(2) and a proton gradient subsequently used for ATP formation. It consists of a core antenna complex that captures photons, and an electron transfer chain that converts photonic excitation into a charge separation. The sequence is that of Cytochrome b559 subunit beta from Picosynechococcus sp. (strain ATCC 27264 / PCC 7002 / PR-6) (Agmenellum quadruplicatum).